Reading from the N-terminus, the 429-residue chain is Glucose-1-phosphate adenylyltransferase (429 aa).

Residues Tyr116, Gly181, 196–197 (EK), and Ser214 contribute to the alpha-D-glucose 1-phosphate site.

The protein belongs to the bacterial/plant glucose-1-phosphate adenylyltransferase family. In terms of assembly, homotetramer.

The enzyme catalyses alpha-D-glucose 1-phosphate + ATP + H(+) = ADP-alpha-D-glucose + diphosphate. The protein operates within glycan biosynthesis; glycogen biosynthesis. In terms of biological role, involved in the biosynthesis of ADP-glucose, a building block required for the elongation reactions to produce glycogen. Catalyzes the reaction between ATP and alpha-D-glucose 1-phosphate (G1P) to produce pyrophosphate and ADP-Glc. The sequence is that of Glucose-1-phosphate adenylyltransferase from Paramagnetospirillum magneticum (strain ATCC 700264 / AMB-1) (Magnetospirillum magneticum).